A 365-amino-acid chain; its full sequence is DNA polymerase IV 1 (365 aa).

A UmuC domain is found at 6-196 (VLHIDMDYFF…LNVSKLWGIG (191 aa)). Mg(2+)-binding residues include Asp10 and Asp113. The active site involves Glu114.

The protein belongs to the DNA polymerase type-Y family. Monomer. It depends on Mg(2+) as a cofactor.

The protein resides in the cytoplasm. The enzyme catalyses DNA(n) + a 2'-deoxyribonucleoside 5'-triphosphate = DNA(n+1) + diphosphate. In terms of biological role, poorly processive, error-prone DNA polymerase involved in untargeted mutagenesis. Copies undamaged DNA at stalled replication forks, which arise in vivo from mismatched or misaligned primer ends. These misaligned primers can be extended by PolIV. Exhibits no 3'-5' exonuclease (proofreading) activity. May be involved in translesional synthesis. This Methanosarcina mazei (strain ATCC BAA-159 / DSM 3647 / Goe1 / Go1 / JCM 11833 / OCM 88) (Methanosarcina frisia) protein is DNA polymerase IV 1 (dbh1).